Here is a 356-residue protein sequence, read N- to C-terminus: UDP-N-acetylglucosamine--N-acetylmuramyl-(pentapeptide) pyrophosphoryl-undecaprenol N-acetylglucosamine transferase (356 aa).

UDP-N-acetyl-alpha-D-glucosamine-binding residues include Arg-166, Ser-196, and Gln-290.

Belongs to the glycosyltransferase 28 family. MurG subfamily.

The protein resides in the cell membrane. The catalysed reaction is Mur2Ac(oyl-L-Ala-gamma-D-Glu-L-Lys-D-Ala-D-Ala)-di-trans,octa-cis-undecaprenyl diphosphate + UDP-N-acetyl-alpha-D-glucosamine = beta-D-GlcNAc-(1-&gt;4)-Mur2Ac(oyl-L-Ala-gamma-D-Glu-L-Lys-D-Ala-D-Ala)-di-trans,octa-cis-undecaprenyl diphosphate + UDP + H(+). It participates in cell wall biogenesis; peptidoglycan biosynthesis. Cell wall formation. Catalyzes the transfer of a GlcNAc subunit on undecaprenyl-pyrophosphoryl-MurNAc-pentapeptide (lipid intermediate I) to form undecaprenyl-pyrophosphoryl-MurNAc-(pentapeptide)GlcNAc (lipid intermediate II). The protein is UDP-N-acetylglucosamine--N-acetylmuramyl-(pentapeptide) pyrophosphoryl-undecaprenol N-acetylglucosamine transferase of Staphylococcus aureus (strain MW2).